A 3564-amino-acid chain; its full sequence is CUB and sushi domain-containing protein 1 (3564 aa).

The N-terminal stretch at 1-26 (MTAWRRFQSLLLLLGLLVLCARLLTA) is a signal peptide. At 27–3487 (AKGQNCGGLV…SHYHGTSSGS (3461 aa)) the chain is on the extracellular side. 10 disulfides stabilise this stretch: Cys-32–Cys-58, Cys-145–Cys-185, Cys-171–Cys-202, Cys-208–Cys-234, Cys-349–Cys-389, Cys-375–Cys-406, Cys-411–Cys-437, Cys-527–Cys-567, Cys-553–Cys-580, and Cys-584–Cys-610. The 109-residue stretch at 32–140 (CGGLVQGPNG…QGFKALYEVL (109 aa)) folds into the CUB 1 domain. Residues Asn-40 and Asn-57 are each glycosylated (N-linked (GlcNAc...) asparagine). A Sushi 1 domain is found at 143-204 (HTCGNPGEIL…WDFPAPFCRA (62 aa)). The CUB 2 domain occupies 208 to 312 (CGGTLRGTSS…KGFNAQFQVK (105 aa)). The 62-residue stretch at 347-408 (DMCPDPGIPE…WSDHRPICRA (62 aa)) folds into the Sushi 2 domain. Residues 411 to 522 (CGSNLRGPSG…PGFKAVYQEI (112 aa)) enclose the CUB 3 domain. The Sushi 3 domain occupies 525 to 582 (GGCGDPGIPAYGKRTGSSFLHGDTLTFECPAAFELVGERVITCQQNNQWSGNKPSCVF). One can recognise a CUB 4 domain in the interval 584 to 692 (CFFNFTASSG…RGFNITYTTF (109 aa)). N-linked (GlcNAc...) asparagine glycans are attached at residues Asn-587 and Asn-686. A Sushi 4 domain is found at 695–756 (NECHDPGIPI…WSSTVPRCEA (62 aa)). 6 disulfides stabilise this stretch: Cys-697/Cys-738, Cys-723/Cys-754, Cys-758/Cys-784, Cys-873/Cys-913, Cys-899/Cys-926, and Cys-930/Cys-956. In terms of domain architecture, CUB 5 spans 758-866 (CGGHLTASSG…IGFLIHYESV (109 aa)). The region spanning 871-928 (DSCLDPGIPVNGHRHGGDFGIRSTVTFSCDPGYTLSDDEPLVCERNHQWNHALPSCDA) is the Sushi 5 domain. A CUB 6 domain is found at 930–1040 (CGGYIQGKSG…EGFNITFSEY (111 aa)). N-linked (GlcNAc...) asparagine glycans are attached at residues Asn-955, Asn-1015, and Asn-1034. Residues 1043–1102 (EPCDDPGVPAFSRRIGFHFGVGDSLTFSCFLGYRLEGATKLTCLGGGRRVWSAPLPRCVA) form the Sushi 6 domain. Cystine bridges form between Cys-1045-Cys-1085, Cys-1071-Cys-1100, and Cys-1104-Cys-1130. The 109-residue stretch at 1104-1212 (CGASVKGNEG…QGFQLTYTSF (109 aa)) folds into the CUB 7 domain. N-linked (GlcNAc...) asparagine glycosylation is found at Asn-1184 and Asn-1197. Residues 1215-1275 (VKCEDPGIPN…WDKPLPSCIA (61 aa)) form the Sushi 7 domain. 12 disulfides stabilise this stretch: Cys-1217-Cys-1258, Cys-1244-Cys-1273, Cys-1277-Cys-1304, Cys-1391-Cys-1431, Cys-1417-Cys-1447, Cys-1451-Cys-1477, Cys-1564-Cys-1604, Cys-1590-Cys-1621, Cys-1625-Cys-1651, Cys-1741-Cys-1781, Cys-1767-Cys-1798, and Cys-1802-Cys-1828. The region spanning 1277–1386 (CGGQIHAATS…SGFSIQFSTS (110 aa)) is the CUB 8 domain. One can recognise a Sushi 8 domain in the interval 1389–1449 (ATCNDPGMPQ…WQPDPPTCIA (61 aa)). The N-linked (GlcNAc...) asparagine glycan is linked to Asn-1399. A CUB 9 domain is found at 1451-1559 (CGGNLTGPAG…SGFAIEFKEK (109 aa)). 2 N-linked (GlcNAc...) asparagine glycosylation sites follow: Asn-1454 and Asn-1572. A Sushi 9 domain is found at 1562-1623 (EACFDPGNIM…WDQVLPSCNA (62 aa)). Residues 1625–1733 (CGGQYTGSEG…RGFHFVYQAV (109 aa)) form the CUB 10 domain. Asn-1644 carries N-linked (GlcNAc...) asparagine glycosylation. A Sushi 10 domain is found at 1739–1800 (TQCSSVPEPR…WNDTIPSCVV (62 aa)). Asn-1792, Asn-1805, and Asn-1882 each carry an N-linked (GlcNAc...) asparagine glycan. Residues 1802–1910 (CSGNFTQRRG…AGFHLEYKTV (109 aa)) form the CUB 11 domain. Residues 1913-1972 (AACQEPALPSNSIKIGDRYMVNDVLSFQCEPGYTLQGRSHISCMPGTVRRWNYPSPLCIA) enclose the Sushi 11 domain. Disulfide bonds link Cys-1915–Cys-1955, Cys-1941–Cys-1970, and Cys-1974–Cys-2000. The CUB 12 domain occupies 1974–2082 (CGGTLSTLGG…QGFKLAYQAY (109 aa)). Asn-2018 carries an N-linked (GlcNAc...) asparagine glycan. Residues 2085–2144 (QNCPDPPPFQNGYMINSDYSVGQSVSFECYPGYILIGHPVLTCQHGINRNWNYPFPRCDA) form the Sushi 12 domain. Cystine bridges form between Cys-2087/Cys-2127, Cys-2113/Cys-2142, and Cys-2146/Cys-2172. The 112-residue stretch at 2146-2257 (CGYNVTSQNG…LNFHAFQLKK (112 aa)) folds into the CUB 13 domain. Asn-2149, Asn-2154, and Asn-2187 each carry an N-linked (GlcNAc...) asparagine glycan. Positions 2256–2317 (KKCQPPPAVP…FEGSLPTCEA (62 aa)) constitute a Sushi 13 domain. 3 cysteine pairs are disulfide-bonded: Cys-2258–Cys-2300, Cys-2286–Cys-2315, and Cys-2319–Cys-2347. One can recognise a CUB 14 domain in the interval 2319–2430 (CPANEVRTGS…KGFKIRYAAP (112 aa)). Asn-2358, Asn-2394, Asn-2400, Asn-2445, Asn-2470, and Asn-2503 each carry an N-linked (GlcNAc...) asparagine glycan. Sushi domains follow at residues 2430-2492 (PYCS…LCQA), 2493-2554 (VSCG…TCKP), 2555-2619 (VACP…SCRV), 2620-2677 (ISCG…RCLA), 2678-2735 (GHCG…VCVP), 2736-2793 (ITCG…TCRV), 2794-2856 (VNCS…KCLA), 2857-2914 (ISCG…HCTG), 2918-2975 (GFCG…VCEA), 2976-3034 (VSCG…DCTI), 3035-3094 (ISCG…VCKA), 3095-3152 (VLCP…QCLP), 3153-3210 (VFCG…TCID), 3214-3272 (NTCP…ECIP), and 3273-3332 (HACR…VCKS). 12 disulfide bridges follow: Cys-2432–Cys-2473, Cys-2459–Cys-2490, Cys-2495–Cys-2537, Cys-2521–Cys-2552, Cys-2557–Cys-2602, Cys-2588–Cys-2617, Cys-2622–Cys-2662, Cys-2648–Cys-2675, Cys-2680–Cys-2720, Cys-2706–Cys-2733, Cys-2738–Cys-2778, and Cys-2764–Cys-2791. A glycan (N-linked (GlcNAc...) asparagine) is linked at Asn-2605. 2 N-linked (GlcNAc...) asparagine glycosylation sites follow: Asn-2750 and Asn-2761. An N-linked (GlcNAc...) asparagine glycan is attached at Asn-2795. Intrachain disulfides connect Cys-2796–Cys-2841, Cys-2827–Cys-2854, Cys-2859–Cys-2899, Cys-2885–Cys-2912, Cys-2920–Cys-2960, Cys-2946–Cys-2973, Cys-2978–Cys-3019, Cys-3005–Cys-3032, Cys-3037–Cys-3079, Cys-3063–Cys-3092, Cys-3097–Cys-3137, Cys-3123–Cys-3150, Cys-3155–Cys-3195, Cys-3181–Cys-3208, Cys-3216–Cys-3257, Cys-3243–Cys-3270, Cys-3275–Cys-3317, and Cys-3302–Cys-3330. Residue Asn-2894 is glycosylated (N-linked (GlcNAc...) asparagine). Asn-2963 carries an N-linked (GlcNAc...) asparagine glycan. Residues Asn-3022 and Asn-3056 are each glycosylated (N-linked (GlcNAc...) asparagine). N-linked (GlcNAc...) asparagine glycosylation occurs at Asn-3105. N-linked (GlcNAc...) asparagine glycans are attached at residues Asn-3228 and Asn-3260. N-linked (GlcNAc...) asparagine glycans are attached at residues Asn-3339, Asn-3379, and Asn-3386. A helical transmembrane segment spans residues 3488–3508 (VAAAILVPFFALILSGFAFYL). At 3509 to 3564 (YKHRTRPKVQYNGYAGHENSNGQASFENPMYDTNLKPTEAKAVRFDTTLNTVCTVV) the chain is on the cytoplasmic side.

This sequence belongs to the CSMD family. As to expression, weakly expressed in most tissues, except in brain. Expressed at intermediate level in brain, including cerebellum, substantia nigra, hippocampus and fetal brain.

It localises to the membrane. Functionally, potential suppressor of squamous cell carcinomas. The polypeptide is CUB and sushi domain-containing protein 1 (CSMD1) (Homo sapiens (Human)).